The chain runs to 216 residues: Adenylate kinase (216 aa).

Residue 10 to 15 (GAGKGT) participates in ATP binding. Residues 30–59 (STGDMIRETIKSDSEIGKELKKVLDAGQLV) are NMP. Residues Thr31, Arg36, 57–59 (QLV), and Gln92 each bind AMP. Residues 122-159 (GRRVHPASGRTYHTKFNPPKVEGKDDITGEDLITRTDD) form an LID region. Residues Arg123 and 132–133 (TY) contribute to the ATP site. AMP is bound by residues Arg156 and Arg167. Gln202 serves as a coordination point for ATP.

It belongs to the adenylate kinase family. In terms of assembly, monomer.

The protein resides in the cytoplasm. It catalyses the reaction AMP + ATP = 2 ADP. The protein operates within purine metabolism; AMP biosynthesis via salvage pathway; AMP from ADP: step 1/1. Catalyzes the reversible transfer of the terminal phosphate group between ATP and AMP. Plays an important role in cellular energy homeostasis and in adenine nucleotide metabolism. The chain is Adenylate kinase from Francisella philomiragia subsp. philomiragia (strain ATCC 25017 / CCUG 19701 / FSC 153 / O#319-036).